We begin with the raw amino-acid sequence, 130 residues long: uncharacterized protein (130 aa).

Positions 76–102 (RKCKNGPSPNKRGSASGCSRRGGGRGS) are disordered.

This is an uncharacterized protein from Saccharomyces cerevisiae (strain ATCC 204508 / S288c) (Baker's yeast).